A 420-amino-acid polypeptide reads, in one-letter code: MLDLKFIRSNPEKVQEGLNKRNKDISIAPILELDEKRRKLLAEVEKMKAIQNQKSKEIPKLKKEGKDTTELMNELKELSDKIKELDSQVKEVEDEIEKILLTIPNIPHESVPIGKDDTENVEVRRWGEPRVPDFEIKPHWEIGEKLGILDFERASKVSGSRFTFYRGLGARLERALINFMLDLHIEKHGYVELFPPFLVARKSMIGTGQLPKFEEDAFKTTDDYFLIPTAEVPVTNYHREEILKEEDLPIKYVAYSACFRAEAGAAGKDTRGLIRQHQFNKVELVKFAKPEDSYDELEKLTADAEDVLKHLGLPYRVVLLCSGDLGFSSAKTYDIEVWMPSYGRYVEISSCSNFESFQARRANIRFRRKDGKLDFVHTLNGSGLAVGRTVAAILENFQQKDGSVVVPEVLRKYMGTDIIK.

T229–E231 contributes to the L-serine binding site. R260–E262 serves as a coordination point for ATP. L-serine is bound at residue E283. E347–S350 contacts ATP. S382 contacts L-serine.

It belongs to the class-II aminoacyl-tRNA synthetase family. Type-1 seryl-tRNA synthetase subfamily. As to quaternary structure, homodimer. The tRNA molecule binds across the dimer.

The protein resides in the cytoplasm. The catalysed reaction is tRNA(Ser) + L-serine + ATP = L-seryl-tRNA(Ser) + AMP + diphosphate + H(+). The enzyme catalyses tRNA(Sec) + L-serine + ATP = L-seryl-tRNA(Sec) + AMP + diphosphate + H(+). The protein operates within aminoacyl-tRNA biosynthesis; selenocysteinyl-tRNA(Sec) biosynthesis; L-seryl-tRNA(Sec) from L-serine and tRNA(Sec): step 1/1. Its function is as follows. Catalyzes the attachment of serine to tRNA(Ser). Is also able to aminoacylate tRNA(Sec) with serine, to form the misacylated tRNA L-seryl-tRNA(Sec), which will be further converted into selenocysteinyl-tRNA(Sec). The chain is Serine--tRNA ligase from Caldicellulosiruptor saccharolyticus (strain ATCC 43494 / DSM 8903 / Tp8T 6331).